A 1705-amino-acid chain; its full sequence is Homeobox-DDT domain protein RLT1 (1705 aa).

5 disordered regions span residues 1–53, 118–167, 237–267, 296–322, and 352–414; these read MEMG…QLET, ELPA…EYET, HDPR…TPNM, GPVP…MPSP, and GVRK…RKEE. The segment at residues 39-98 is a DNA-binding region (homeobox); the sequence is VKPKRQMKTPFQLETLEKVYSEEKYPSEATRAELSEKLDLSDRQLQMWFCHRRLKDKKDG. A compositionally biased stretch (low complexity) spans 136–159; sequence GSESGCSPYSNSRRNFASGSSSSR. 2 stretches are compositionally biased toward polar residues: residues 253-265 and 310-319; these read EQQS…SFTP and RNCSTSQQDM. The region spanning 549–608 is the DDT domain; sequence DETVGNLLMVWRFLISFSDVLDLWPFTLDEFIQAFHDYDSRLLGEIHVTLLRSIIRDVED. Residues 731-800 enclose the HTH HARE-type domain; it reads GTVKFAAFHV…APSTYCVRAP (70 aa). 5 disordered regions span residues 1028–1053, 1198–1229, 1441–1502, 1561–1635, and 1652–1705; these read TRER…DLSN, VNHS…SIRV, PEDE…KAQS, PKSE…FVDY, and AIEE…SSDS. Positions 1201 to 1220 are enriched in low complexity; sequence SPTDSVSPSSSAISGSNSDS. Basic and acidic residues predominate over residues 1455-1465; that stretch reads SPFKGKGPREQ. 3 stretches are compositionally biased toward acidic residues: residues 1565–1574, 1611–1628, and 1669–1684; these read EVEEDEEEEE, VDDE…DEDG, and GEDD…DDDV.

As to quaternary structure, interacts with CHR11 and CHR17. Interacts (via the DDT domain) with CHR11 (via C-terminus). In terms of tissue distribution, highly expressed in growing tissues such as inflorescence and flower meristems, young leaves and floral organs. Expressed in roots, rosette and cauline leaves, stems, flowers, inflorescences and siliques.

It localises to the nucleus. Transcriptional regulator required for the maintenance of the plant vegetative phase. In association with CHR11 or CHR17 may prevent the early activation of the vegetative-to-reproductive transition by regulating key genes that contribute to flower timing, such as FT, SEP1, SEP3, AGL8/FUL, SOC1 and FLC. The chain is Homeobox-DDT domain protein RLT1 from Arabidopsis thaliana (Mouse-ear cress).